Reading from the N-terminus, the 279-residue chain is uncharacterized protein (279 aa).

The protein to M.tuberculosis Rv2569c.

This is an uncharacterized protein from Mycobacterium leprae (strain TN).